Reading from the N-terminus, the 577-residue chain is Sensory neuron membrane protein 2 (577 aa).

Over 1 to 6 (MVQCTL) the chain is Cytoplasmic. A helical transmembrane segment spans residues 7-27 (IWAGIGAMMAVSGALLGWVVF). The Extracellular segment spans residues 28-519 (PRAVHEKVIE…LMKVLSLLDV (492 aa)). N-linked (GlcNAc...) asparagine glycosylation is found at asparagine 66, asparagine 161, asparagine 271, and asparagine 307. 3 disulfides stabilise this stretch: cysteine 316–cysteine 384, cysteine 345–cysteine 411, and cysteine 386–cysteine 400. The chain crosses the membrane as a helical span at residues 520-540 (VQWVLIGVGLLLAVLMPTVYF). Topologically, residues 541 to 577 (VKRCRGEGSRTVSPAVTATTSAASLSTVAGVTGDRSK) are cytoplasmic.

Belongs to the CD36 family.

The protein localises to the cell membrane. Plays an olfactory role that is not restricted to pheromone sensitivity. The protein is Sensory neuron membrane protein 2 of Anopheles gambiae (African malaria mosquito).